An 879-amino-acid chain; its full sequence is MGRLASRPLLLALLSLALCRGRVVRVPTATLVRVVGTELVIPCNVSDYDGPSEQNFDWSFSSLGSSFVELASTWEVGFPAQLYQERLQRGEILLRRTANDAVELHIKNVQPSDQGHYKCSTPSTDATVQGNYEDTVQVKVLADSLHVGPSARPPPSLSLREGEPFELRCTAASASPLHTHLALLWEVHRGPARRSVLALTHEGRFHPGLGYEQRYHSGDVRLDTVGSDAYRLSVSRALSADQGSYRCIVSEWIAEQGNWQEIQEKAVEVATVVIQPSVLRAAVPKNVSVAEGKELDLTCNITTDRADDVRPEVTWSFSRMPDSTLPGSRVLARLDRDSLVHSSPHVALSHVDARSYHLLVRDVSKENSGYYYCHVSLWAPGHNRSWHKVAEAVSSPAGVGVTWLEPDYQVYLNASKVPGFADDPTELACRVVDTKSGEANVRFTVSWYYRMNRRSDNVVTSELLAVMDGDWTLKYGERSKQRAQDGDFIFSKEHTDTFNFRIQRTTEEDRGNYYCVVSAWTKQRNNSWVKSKDVFSKPVNIFWALEDSVLVVKARQPKPFFAAGNTFEMTCKVSSKNIKSPRYSVLIMAEKPVGDLSSPNETKYIISLDQDSVVKLENWTDASRVDGVVLEKVQEDEFRYRMYQTQVSDAGLYRCMVTAWSPVRGSLWREAATSLSNPIEIDFQTSGPIFNASVHSDTPSVIRGDLIKLFCIITVEGAALDPDDMAFDVSWFAVHSFGLDKAPVLLSSLDRKGIVTTSRRDWKSDLSLERVSVLEFLLQVHGSEDQDFGNYYCSVTPWVKSPTGSWQKEAEIHSKPVFITVKMDVLNAFKYPLLIGVGLSTVIGLLSCLIGYCSSHWCCKKEVQETRRERRRLMSMEMD.

Positions 1–25 (MGRLASRPLLLALLSLALCRGRVVR) are cleaved as a signal peptide. 2 consecutive Ig-like C2-type domains span residues 26–129 (VPTA…ATVQ) and 149–268 (PSAR…KAVE). Residues 26 to 832 (VPTATLVRVV…MDVLNAFKYP (807 aa)) lie on the Extracellular side of the membrane. 2 cysteine pairs are disulfide-bonded: cysteine 43–cysteine 119 and cysteine 169–cysteine 247. Asparagine 44 carries N-linked (GlcNAc...) asparagine glycosylation. Threonine 271 carries the post-translational modification Phosphothreonine. 4 consecutive Ig-like C2-type domains span residues 276 to 394 (PSVL…EAVS), 406 to 536 (PDYQ…DVFS), 544 to 662 (ALED…AWSP), and 688 to 813 (PIFN…AEIH). 4 N-linked (GlcNAc...) asparagine glycosylation sites follow: asparagine 286, asparagine 300, asparagine 383, and asparagine 413. Cysteine 299 and cysteine 373 are disulfide-bonded. The short motif at 424–427 (PTEL) is the Endoplasmic reticulum retention signal element. Cysteines 429 and 515 form a disulfide. N-linked (GlcNAc...) asparagine glycans are attached at residues asparagine 525, asparagine 600, asparagine 618, and asparagine 691. Cysteine 571 and cysteine 655 form a disulfide bridge. The Cell attachment site signature appears at 703-705 (RGD). The cysteines at positions 711 and 793 are disulfide-linked. A helical transmembrane segment spans residues 833-853 (LLIGVGLSTVIGLLSCLIGYC). The Cytoplasmic segment spans residues 854–879 (SSHWCCKKEVQETRRERRRLMSMEMD).

As to quaternary structure, interacts with CD9 and CD81. Part of a complex composed of CD9, CD81 and IGSF8. Also seems to interact with CD63, CD82 and CD151.

It localises to the endoplasmic reticulum membrane. The protein localises to the golgi apparatus. It is found in the trans-Golgi network membrane. Functionally, inhibits the binding of prostaglandin F2-alpha (PGF2-alpha) to its specific FP receptor, by decreasing the receptor number rather than the affinity constant. Functional coupling with the prostaglandin F2-alpha receptor seems to occur. In myoblasts, associates with tetraspanins CD9 and CD81 to prevent myotube fusion during muscle regeneration. The polypeptide is Prostaglandin F2 receptor negative regulator (PTGFRN) (Homo sapiens (Human)).